A 197-amino-acid chain; its full sequence is Putative RING-H2 finger protein ATL71 (197 aa).

Residues 20–40 form a helical membrane-spanning segment; that stretch reads MGGLAYGIGVSIGILMLITTI. The tract at residues 53–80 is disordered; it reads SASPTTTPRTRRRQRESNGTLPPGQERF. The segment at 129-171 adopts an RING-type; atypical zinc-finger fold; that stretch reads CSICLADYKKMDMIRVLPDCNHLFHDNCVDPWLRLHPTCPVCR.

The protein belongs to the RING-type zinc finger family. ATL subfamily.

It localises to the membrane. It carries out the reaction S-ubiquitinyl-[E2 ubiquitin-conjugating enzyme]-L-cysteine + [acceptor protein]-L-lysine = [E2 ubiquitin-conjugating enzyme]-L-cysteine + N(6)-ubiquitinyl-[acceptor protein]-L-lysine.. It functions in the pathway protein modification; protein ubiquitination. The chain is Putative RING-H2 finger protein ATL71 (ATL71) from Arabidopsis thaliana (Mouse-ear cress).